A 273-amino-acid chain; its full sequence is 2,3,4,5-tetrahydropyridine-2,6-dicarboxylate N-succinyltransferase (273 aa).

Residues R104 and D141 each contribute to the substrate site.

Belongs to the transferase hexapeptide repeat family. In terms of assembly, homotrimer.

The protein localises to the cytoplasm. It carries out the reaction (S)-2,3,4,5-tetrahydrodipicolinate + succinyl-CoA + H2O = (S)-2-succinylamino-6-oxoheptanedioate + CoA. The protein operates within amino-acid biosynthesis; L-lysine biosynthesis via DAP pathway; LL-2,6-diaminopimelate from (S)-tetrahydrodipicolinate (succinylase route): step 1/3. The chain is 2,3,4,5-tetrahydropyridine-2,6-dicarboxylate N-succinyltransferase from Nitrosomonas eutropha (strain DSM 101675 / C91 / Nm57).